The primary structure comprises 575 residues: E3 ubiquitin-protein ligase kcmf-1 (575 aa).

The ZZ-type zinc-finger motif lies at 9–73; the sequence is HEGVSCDGCA…PMQLILSSVD (65 aa). Zn(2+) contacts are provided by Cys14, Cys17, Cys29, Cys32, Cys38, Cys41, His59, and His63. Disordered stretches follow at residues 277-306 and 530-575; these read PIYP…DDND and EADE…INID. Acidic residues-rich tracts occupy residues 297–306 and 530–563; these read SADESEDDND and EADE…ENDS.

Belongs to the KCMF1 family.

Its subcellular location is the cytoplasm. It is found in the late endosome. The protein localises to the lysosome. The catalysed reaction is S-ubiquitinyl-[E2 ubiquitin-conjugating enzyme]-L-cysteine + [acceptor protein]-L-lysine = [E2 ubiquitin-conjugating enzyme]-L-cysteine + N(6)-ubiquitinyl-[acceptor protein]-L-lysine.. Its pathway is protein modification; protein ubiquitination. In terms of biological role, E3 ubiquitin-protein ligase which accepts ubiquitin from an E2 ubiquitin-conjugating enzyme and then transfers it to targeted substrates, promoting their degradation by the proteasome. This chain is E3 ubiquitin-protein ligase kcmf-1, found in Caenorhabditis elegans.